The chain runs to 31 residues: Conotoxin pc6d (31 aa).

3 disulfides stabilise this stretch: Cys-2/Cys-20, Cys-9/Cys-25, and Cys-19/Cys-29.

The protein belongs to the conotoxin O1 superfamily. Expressed by the venom duct.

It is found in the secreted. The chain is Conotoxin pc6d from Conus pictus (Cone snail).